Here is a 176-residue protein sequence, read N- to C-terminus: Peptide deformylase (176 aa).

Residues cysteine 94 and histidine 136 each coordinate Fe cation. Residue glutamate 137 is part of the active site. Position 140 (histidine 140) interacts with Fe cation.

Belongs to the polypeptide deformylase family. Fe(2+) is required as a cofactor.

The catalysed reaction is N-terminal N-formyl-L-methionyl-[peptide] + H2O = N-terminal L-methionyl-[peptide] + formate. Its function is as follows. Removes the formyl group from the N-terminal Met of newly synthesized proteins. Requires at least a dipeptide for an efficient rate of reaction. N-terminal L-methionine is a prerequisite for activity but the enzyme has broad specificity at other positions. The chain is Peptide deformylase from Bartonella quintana (strain Toulouse) (Rochalimaea quintana).